Here is a 556-residue protein sequence, read N- to C-terminus: Oxygen-dependent choline dehydrogenase (556 aa).

6–35 (DYIIIGAGSAGNVLAARLTEDPGVTVLLLE) lines the FAD pocket. Catalysis depends on His475, which acts as the Proton acceptor.

This sequence belongs to the GMC oxidoreductase family. Requires FAD as cofactor.

The enzyme catalyses choline + A = betaine aldehyde + AH2. It catalyses the reaction betaine aldehyde + NAD(+) + H2O = glycine betaine + NADH + 2 H(+). Its pathway is amine and polyamine biosynthesis; betaine biosynthesis via choline pathway; betaine aldehyde from choline (cytochrome c reductase route): step 1/1. Involved in the biosynthesis of the osmoprotectant glycine betaine. Catalyzes the oxidation of choline to betaine aldehyde and betaine aldehyde to glycine betaine at the same rate. This is Oxygen-dependent choline dehydrogenase from Xanthomonas euvesicatoria pv. vesicatoria (strain 85-10) (Xanthomonas campestris pv. vesicatoria).